An 824-amino-acid polypeptide reads, in one-letter code: Ent-copalyl diphosphate synthase AN1, chloroplastic (824 aa).

The N-terminal 63 residues, 1–63 (MPYPHPYPWQ…SSAKVFQTSR (63 aa)), are a transit peptide targeting the chloroplast. Positions 1–87 (MPYPHPYPWQ…QDLEDEHQAE (87 aa)) are disordered. The span at 44–63 (ATTTQQPDNVSSAKVFQTSR) shows a compositional bias: polar residues. A substrate-binding site is contributed by lysine 247. Residues aspartate 379 and aspartate 381 each contribute to the Mg(2+) site. The DXDD motif motif lies at 379–382 (DVDD). Lysine 465 contributes to the substrate binding site.

This sequence belongs to the terpene synthase family. Tpsc subfamily. Mg(2+) is required as a cofactor.

Its subcellular location is the plastid. The protein resides in the chloroplast. It catalyses the reaction (2E,6E,10E)-geranylgeranyl diphosphate = ent-copalyl diphosphate. Its pathway is plant hormone biosynthesis; gibberellin biosynthesis. Functionally, involved in giberellin biosynthesis. Catalyzes the conversion of geranylgeranyl diphosphate to the gibberellin precursor ent-copalyl diphosphate. The protein is Ent-copalyl diphosphate synthase AN1, chloroplastic of Zea mays (Maize).